Consider the following 345-residue polypeptide: 3-isopropylmalate dehydrogenase (345 aa).

NAD(+) is bound at residue 74–87; sequence GPKWDGLPRKIRPE. Substrate is bound by residues Arg94, Arg104, Arg132, and Asp217. Residues Asp217, Asp241, and Asp245 each contribute to the Mg(2+) site. 274–286 is an NAD(+) binding site; sequence GSAPDIAGKGLAN.

The protein belongs to the isocitrate and isopropylmalate dehydrogenases family. LeuB type 1 subfamily. Homodimer. Mg(2+) serves as cofactor. The cofactor is Mn(2+).

It is found in the cytoplasm. The catalysed reaction is (2R,3S)-3-isopropylmalate + NAD(+) = 4-methyl-2-oxopentanoate + CO2 + NADH. It participates in amino-acid biosynthesis; L-leucine biosynthesis; L-leucine from 3-methyl-2-oxobutanoate: step 3/4. Catalyzes the oxidation of 3-carboxy-2-hydroxy-4-methylpentanoate (3-isopropylmalate) to 3-carboxy-4-methyl-2-oxopentanoate. The product decarboxylates to 4-methyl-2 oxopentanoate. This chain is 3-isopropylmalate dehydrogenase (leuB), found in Thermus thermophilus (strain ATCC BAA-163 / DSM 7039 / HB27).